The chain runs to 118 residues: Large ribosomal subunit protein uL18 (118 aa).

The protein belongs to the universal ribosomal protein uL18 family. In terms of assembly, part of the 50S ribosomal subunit; part of the 5S rRNA/L5/L18/L25 subcomplex. Contacts the 5S and 23S rRNAs.

This is one of the proteins that bind and probably mediate the attachment of the 5S RNA into the large ribosomal subunit, where it forms part of the central protuberance. In Rickettsia prowazekii (strain Madrid E), this protein is Large ribosomal subunit protein uL18.